Here is a 69-residue protein sequence, read N- to C-terminus: uncharacterized protein (69 aa).

The first 19 residues, 1-19 (MKRIWVSLMIAITACSAHA), serve as a signal peptide directing secretion.

This is an uncharacterized protein from Pasteurella multocida (strain Pm70).